We begin with the raw amino-acid sequence, 592 residues long: Protein kinase C zeta type (592 aa).

Positions 15–98 constitute a PB1 domain; sequence RVRLKAHYGG…EVLIIHVFPS (84 aa). The tract at residues 79 to 145 is interaction with SQSTM1; it reads AFRLVCQGRD…KRFNRGAYCG (67 aa). The Phorbol-ester/DAG-type zinc finger occupies 130–180; sequence GHLFQAKRFNRGAYCGQCSERIWGLSRQGYRCINCKLLVHKRCHVLVPLTC. One can recognise a Protein kinase domain in the interval 252-518; the sequence is FDLIRVIGRG…FSDIKSHAFF (267 aa). ATP contacts are provided by residues 258–266 and K281; that span reads IGRGSYAKV. D376 functions as the Proton acceptor in the catalytic mechanism. T410 carries the post-translational modification Phosphothreonine; by PDPK1 and PI3K. The region spanning 519–590 is the AGC-kinase C-terminal domain; it reads RSIDWDLLEK…INPLLLSAEE (72 aa). The residue at position 560 (T560) is a Phosphothreonine. Residue S591 is modified to Phosphoserine.

The protein belongs to the protein kinase superfamily. AGC Ser/Thr protein kinase family. PKC subfamily. In terms of assembly, interacts directly with SQSTM1. Forms a ternary complex with SQSTM1 and KCNAB2. Forms another ternary complex with SQSTM1 and GABRR3. Forms a complex with SQSTM1 and MAP2K5. Interacts with PARD6A, PARD6B and PARD6G. Part of a complex with PARD3, PARD6A or PARD6B or PARD6G and CDC42 or RAC1. Interacts with ADAP1/CENTA1. Interacts (via the protein kinase domain) with WWC1. Forms a tripartite complex with WWC1 and DDR1, but predominantly in the absence of collagen. Interacts with PDPK1 (via N-terminal region). Interacts with WDFY2 (via WD repeats 1-3). Interacts with VAMP2. Forms a complex with WDFY2 and VAMP2. Interacts with APPL1. Interacts with WWC1, WWC2 and WWC3. Post-translationally, CDH5 is required for its phosphorylation at Thr-410. Phosphorylated by protein kinase PDPK1; phosphorylation is inhibited by the apoptotic C-terminal cleavage product of PKN2. Phosphorylation at Thr-410 by PI3K activates the kinase. In terms of tissue distribution, isoform 1: In brain, highly expressed in cerebellar granule neurons and cerebellar astrocytes (at protein level). Expressed at low levels in testes, lung and kidney. Isoform 2: Specifically expressed in brain where it localizes to cerebellar granule neurons (at protein level).

It is found in the cytoplasm. Its subcellular location is the endosome. It localises to the cell junction. The protein resides in the membrane. It catalyses the reaction L-seryl-[protein] + ATP = O-phospho-L-seryl-[protein] + ADP + H(+). It carries out the reaction L-threonyl-[protein] + ATP = O-phospho-L-threonyl-[protein] + ADP + H(+). Its activity is regulated as follows. Atypical PKCs (PRKCI and PRKCZ) exhibit an elevated basal enzymatic activity (that may be due to the interaction with SMG1 or SQSTM1) and are not regulated by diacylglycerol, phosphatidylserine, phorbol esters or calcium ions. Two specific sites, Thr-410 (activation loop of the kinase domain) and Thr-560 (turn motif), need to be phosphorylated for its full activation. Phosphatidylinositol 3,4,5-trisphosphate might be a physiological activator. Isoform 2: Constitutively active. Calcium- and diacylglycerol-independent serine/threonine-protein kinase that functions in phosphatidylinositol 3-kinase (PI3K) pathway and mitogen-activated protein (MAP) kinase cascade, and is involved in NF-kappa-B activation, mitogenic signaling, cell proliferation, cell polarity, inflammatory response and maintenance of long-term potentiation (LTP). Upon lipopolysaccharide (LPS) treatment in macrophages, or following mitogenic stimuli, functions downstream of PI3K to activate MAP2K1/MEK1-MAPK1/ERK2 signaling cascade independently of RAF1 activation. Required for insulin-dependent activation of AKT3, but may function as an adapter rather than a direct activator. Upon insulin treatment may act as a downstream effector of PI3K and contribute to the activation of translocation of the glucose transporter SLC2A4/GLUT4 and subsequent glucose transport in adipocytes. In EGF-induced cells, binds and activates MAP2K5/MEK5-MAPK7/ERK5 independently of its kinase activity and can activate JUN promoter through MEF2C. Through binding with SQSTM1/p62, functions in interleukin-1 signaling and activation of NF-kappa-B with the specific adapters RIPK1 and TRAF6. Participates in TNF-dependent transactivation of NF-kappa-B by phosphorylating and activating IKBKB kinase, which in turn leads to the degradation of NF-kappa-B inhibitors. In migrating astrocytes, forms a cytoplasmic complex with PARD6A and is recruited by CDC42 to function in the establishment of cell polarity along with the microtubule motor and dynein. In association with FEZ1, stimulates neuronal differentiation in PC12 cells. In the inflammatory response, is required for the T-helper 2 (Th2) differentiation process, including interleukin production, efficient activation of JAK1 and the subsequent phosphorylation and nuclear translocation of STAT6. May be involved in development of allergic airway inflammation (asthma), a process dependent on Th2 immune response. In the NF-kappa-B-mediated inflammatory response, can relieve SETD6-dependent repression of NF-kappa-B target genes by phosphorylating the RELA subunit at 'Ser-311'. Phosphorylates VAMP2 in vitro. Phosphorylates and activates LRRK1, which phosphorylates RAB proteins involved in intracellular trafficking. Its function is as follows. Involved in late synaptic long term potentiation phase in CA1 hippocampal cells and long term memory maintenance. This chain is Protein kinase C zeta type (Prkcz), found in Mus musculus (Mouse).